The sequence spans 315 residues: Acetaldehyde dehydrogenase 2 (315 aa).

Position 15–18 (15–18 (SGNI)) interacts with NAD(+). Cysteine 135 (acyl-thioester intermediate) is an active-site residue. Residues 166–174 (SAGPGTRAN) and asparagine 293 contribute to the NAD(+) site.

The protein belongs to the acetaldehyde dehydrogenase family.

The enzyme catalyses acetaldehyde + NAD(+) + CoA = acetyl-CoA + NADH + H(+). In Paraburkholderia phymatum (strain DSM 17167 / CIP 108236 / LMG 21445 / STM815) (Burkholderia phymatum), this protein is Acetaldehyde dehydrogenase 2.